A 309-amino-acid polypeptide reads, in one-letter code: Homoserine O-succinyltransferase (309 aa).

Catalysis depends on cysteine 142, which acts as the Acyl-thioester intermediate. Substrate contacts are provided by lysine 163 and serine 192. Histidine 235 functions as the Proton acceptor in the catalytic mechanism. Glutamate 237 is an active-site residue. Arginine 249 contributes to the substrate binding site.

The protein belongs to the MetA family.

It localises to the cytoplasm. It carries out the reaction L-homoserine + succinyl-CoA = O-succinyl-L-homoserine + CoA. The protein operates within amino-acid biosynthesis; L-methionine biosynthesis via de novo pathway; O-succinyl-L-homoserine from L-homoserine: step 1/1. Functionally, transfers a succinyl group from succinyl-CoA to L-homoserine, forming succinyl-L-homoserine. This is Homoserine O-succinyltransferase from Yersinia pseudotuberculosis serotype O:1b (strain IP 31758).